Here is a 141-residue protein sequence, read N- to C-terminus: Brain ribonuclease (141 aa).

Positions 1–25 are disordered; the sequence is KETAAAKFRRQHMDSGSSSSSNSNY. Positions 7 and 10 each coordinate substrate. Residue His12 is the Proton acceptor of the active site. Low complexity predominate over residues 15–24; that stretch reads SGSSSSSNSN. Intrachain disulfides connect Cys26/Cys84, Cys40/Cys95, Cys58/Cys110, and Cys65/Cys72. 41–45 is a binding site for substrate; it reads KPVNT. The N-linked (GlcNAc...) asparagine glycan is linked to Asn62. Substrate contacts are provided by Lys66 and Arg85. His119 functions as the Proton donor in the catalytic mechanism. Thr129 carries an O-linked (GalNAc...) threonine glycan.

The protein belongs to the pancreatic ribonuclease family.

It localises to the secreted. The chain is Brain ribonuclease (BRN) from Giraffa camelopardalis (Giraffe).